We begin with the raw amino-acid sequence, 290 residues long: ATP synthase gamma chain (290 aa).

It belongs to the ATPase gamma chain family. F-type ATPases have 2 components, CF(1) - the catalytic core - and CF(0) - the membrane proton channel. CF(1) has five subunits: alpha(3), beta(3), gamma(1), delta(1), epsilon(1). CF(0) has three main subunits: a, b and c.

The protein localises to the cell inner membrane. Functionally, produces ATP from ADP in the presence of a proton gradient across the membrane. The gamma chain is believed to be important in regulating ATPase activity and the flow of protons through the CF(0) complex. The chain is ATP synthase gamma chain from Gemmatimonas aurantiaca (strain DSM 14586 / JCM 11422 / NBRC 100505 / T-27).